Here is a 341-residue protein sequence, read N- to C-terminus: Long-chain acyl-[acyl-carrier-protein] reductase (341 aa).

This sequence belongs to the short-chain dehydrogenases/reductases (SDR) family. A divalent metal cation serves as cofactor.

It carries out the reaction a long-chain fatty aldehyde + holo-[ACP] + NADP(+) = a long-chain fatty acyl-[ACP] + NADPH + H(+). It catalyses the reaction a long-chain fatty aldehyde + holo-[ACP] + NAD(+) = a long-chain fatty acyl-[ACP] + NADH + H(+). In terms of biological role, catalyzes the NADP-dependent reduction of long-chain acyl-ACP to the corresponding fatty aldehyde. Involved in the biosynthesis of alkanes, mainly heptadecane and pentadecane, by producing the fatty aldehydes used by aldehyde decarbonylase. This is Long-chain acyl-[acyl-carrier-protein] reductase from Synechococcus elongatus (strain ATCC 33912 / PCC 7942 / FACHB-805) (Anacystis nidulans R2).